We begin with the raw amino-acid sequence, 3014 residues long: Cadherin EGF LAG seven-pass G-type receptor 1 (3014 aa).

An N-terminal signal peptide occupies residues 1–20; it reads MAPPPPPVLPVLLLLAAAAA. Residues 22–2469 lie on the Extracellular side of the membrane; that stretch reads PAMGLRAAAW…RENGEVLPLK (2448 aa). Residues 205–242 are disordered; that stretch reads AGTPSASPSPSPPLPPNLPEARAGPARRARRGTSGRGS. The span at 211-222 shows a compositional bias: pro residues; that stretch reads SPSPSPPLPPNL. Cadherin domains follow at residues 246-353, 354-459, 460-565, 566-687, 688-789, 790-892, 893-999, 1000-1101, and 1106-1224; these read PMPN…SPVF, EQSE…YPQF, SEQN…EPIF, VSSP…DPVF, TQPT…RPVF, QSSH…APQF, LWDF…APMF, EKDE…PPVL, and ILFN…SPLL. N-linked (GlcNAc...) asparagine glycosylation is found at Asn403, Asn546, Asn634, and Asn778. Asn1114, Asn1139, Asn1213, Asn1249, Asn1259, and Asn1287 each carry an N-linked (GlcNAc...) asparagine glycan. The EGF-like 1; calcium-binding domain maps to 1303 to 1361; it reads DDNICLREPCENYMKCVSVLRFDSSAPFLSSTTVLFRPIHPINGLRCRCPPGFTGDYCE. 9 disulfide bridges follow: Cys1307/Cys1318, Cys1312/Cys1349, Cys1351/Cys1360, Cys1367/Cys1378, Cys1372/Cys1387, Cys1389/Cys1398, Cys1407/Cys1418, Cys1412/Cys1428, and Cys1430/Cys1440. The EGF-like 2; calcium-binding domain maps to 1363 to 1399; that stretch reads EIDLCYSDPCGANGRCRSREGGYTCECFEDFTGEHCE. An EGF-like 3; calcium-binding domain is found at 1403 to 1441; that stretch reads RSGRCANGVCKNGGTCVNLLIGGFHCVCPPGEYERPYCE. The region spanning 1442–1646 is the Laminin G-like 1 domain; it reads VTTRSFPPQS…IANNGTREGC (205 aa). Residues Asn1576, Asn1623, and Asn1640 are each glycosylated (N-linked (GlcNAc...) asparagine). 13 disulfides stabilise this stretch: Cys1620–Cys1646, Cys1653–Cys1664, Cys1658–Cys1673, Cys1675–Cys1684, Cys1840–Cys1870, Cys1876–Cys1887, Cys1881–Cys1896, Cys1898–Cys1907, Cys1911–Cys1922, Cys1916–Cys1934, Cys1936–Cys1945, Cys1953–Cys1966, and Cys1968–Cys1978. The 37-residue stretch at 1649-1685 folds into the EGF-like 4; calcium-binding domain; it reads RRNFCDGRRCQNGGTCVNRWNMYLCECPLRFGGKNCE. Asn1666 bears the (3R)-3-hydroxyasparagine mark. The Laminin G-like 2 domain occupies 1689-1870; the sequence is PHPQLFSGES…ALKVRVKDGC (182 aa). Residues 1872 to 1907 form the EGF-like 5; calcium-binding domain; sequence VDDPCTSSPCPPNSRCHDAWEDYSCVCDKGYLGINC. Position 1889 is a (3R)-3-hydroxyaspartate (Asp1889). One can recognise an EGF-like 6; calcium-binding domain in the interval 1908–1946; the sequence is VDACHLNPCENMGACVRSPGSPQGYVCECGPSHYGPYCE. The 33-residue stretch at 1947 to 1979 folds into the EGF-like 7; calcium-binding domain; sequence NKLDLPCPRGWWGNPVCGPCHCAVSKGFDPDCN. N-linked (GlcNAc...) asparagine glycosylation is present at Asn1979. The EGF-like 8; calcium-binding domain maps to 1981–2016; it reads TNGQCQCKENYYKLLAQDTCLPCDCFPHGSHSRTCD. Cystine bridges form between Cys1985–Cys2000, Cys1987–Cys2003, Cys2005–Cys2015, Cys2024–Cys2033, and Cys2036–Cys2048. Residues 2003–2050 form the Laminin EGF-like domain; it reads CDCFPHGSHSRTCDMATGQCACKPGVIGRQCNRCDNPFAEVTTLGCEV. Residues Asn2103, Asn2122, and Asn2257 are each glycosylated (N-linked (GlcNAc...) asparagine). A disordered region spans residues 2291–2328; that stretch reads PEEKEGPLLRPAGRRTTPQTTRPGPGTEREAPISRRRR. The GAIN-B domain maps to 2297–2461; the sequence is PLLRPAGRRT…AVLMDISRRE (165 aa). A compositionally biased stretch (low complexity) spans 2300–2316; the sequence is RPAGRRTTPQTTRPGPG. 2 cysteine pairs are disulfide-bonded: Cys2411-Cys2443 and Cys2431-Cys2445. The tract at residues 2411–2461 is GPS; that stretch reads CVFWNHSLAVGGTGGWSARGCELLSRNRTHVACQCSHTASFAVLMDISRRE. Asn2415 and Asn2437 each carry an N-linked (GlcNAc...) asparagine glycan. Residues 2470-2490 traverse the membrane as a helical segment; the sequence is IVTYAAVSLSLAALLVAFVLL. Residues 2491 to 2501 lie on the Cytoplasmic side of the membrane; it reads SLVRMLRSNLH. Residues 2502-2522 form a helical membrane-spanning segment; that stretch reads SIHKHLAVALFLSQLVFVIGI. Asn2523 carries N-linked (GlcNAc...) asparagine glycosylation. The Extracellular segment spans residues 2523–2527; sequence NQTEN. Residues 2528-2548 traverse the membrane as a helical segment; the sequence is PFLCTVVAILLHYIYMSTFAW. Over 2549 to 2572 the chain is Cytoplasmic; sequence TLVESLHVYRMLTEVRNIDTGPMR. A helical transmembrane segment spans residues 2573-2593; sequence FYYVVGWGIPAIVTGLAVGLD. Residues 2594–2611 are Extracellular-facing; that stretch reads PQGYGNPDFCWLSLQDTL. A helical transmembrane segment spans residues 2612-2632; that stretch reads IWSFAGPIGAVIIINTVTSVL. Topologically, residues 2633–2655 are cytoplasmic; sequence SAKVSCQRKHHYYGKKGIVSLLR. Residues 2656-2676 traverse the membrane as a helical segment; the sequence is TAFLLLLLISATWLLGLLAVN. The Extracellular segment spans residues 2677-2683; sequence RDALSFH. A helical transmembrane segment spans residues 2684–2704; the sequence is YLFAIFSGLQGPFVLLFHCVL. At 2705–3014 the chain is on the cytoplasmic side; it reads NQEVRKHLKG…QADGSDSEKP (310 aa). Residues Ser2761 and Ser2764 each carry the phosphoserine modification. Disordered stretches follow at residues 2777–2939 and 2954–3014; these read SSGL…PPPL and LADC…SEKP. The span at 2796-2806 shows a compositional bias: basic and acidic residues; sequence SCKDPPGHDSD. The segment covering 2814 to 2825 has biased composition (low complexity); the sequence is DEQSSSYASSHS. A phosphoserine mark is found at Ser2871 and Ser2873. The segment covering 2876-2904 has biased composition (basic and acidic residues); that stretch reads PSGKPRLKVETKVSVELHREEQGSHRGEY. The segment covering 2960-2969 has biased composition (low complexity); it reads SPTSSRTSSL. Basic and acidic residues predominate over residues 2983–2992; the sequence is PGREPGRDHL.

Belongs to the G-protein coupled receptor 2 family. LN-TM7 subfamily. The iron and 2-oxoglutarate dependent 3-hydroxylation of aspartate and asparagine is (R) stereospecific within EGF domains.

It localises to the cell membrane. Its function is as follows. Receptor that may have an important role in cell/cell signaling during nervous system formation. This is Cadherin EGF LAG seven-pass G-type receptor 1 (CELSR1) from Homo sapiens (Human).